The chain runs to 379 residues: Dual-specificity RNA methyltransferase RlmN (379 aa).

The active-site Proton acceptor is the glutamate 95. Residues 101-345 (EETRGTLCVS…TTVRKTRGDD (245 aa)) enclose the Radical SAM core domain. A disulfide bond links cysteine 108 and cysteine 350. [4Fe-4S] cluster is bound by residues cysteine 115, cysteine 119, and cysteine 122. S-adenosyl-L-methionine contacts are provided by residues 176–177 (GE), serine 208, 230–232 (SLH), and asparagine 307. The active-site S-methylcysteine intermediate is the cysteine 350.

Belongs to the radical SAM superfamily. RlmN family. It depends on [4Fe-4S] cluster as a cofactor.

Its subcellular location is the cytoplasm. It carries out the reaction adenosine(2503) in 23S rRNA + 2 reduced [2Fe-2S]-[ferredoxin] + 2 S-adenosyl-L-methionine = 2-methyladenosine(2503) in 23S rRNA + 5'-deoxyadenosine + L-methionine + 2 oxidized [2Fe-2S]-[ferredoxin] + S-adenosyl-L-homocysteine. The catalysed reaction is adenosine(37) in tRNA + 2 reduced [2Fe-2S]-[ferredoxin] + 2 S-adenosyl-L-methionine = 2-methyladenosine(37) in tRNA + 5'-deoxyadenosine + L-methionine + 2 oxidized [2Fe-2S]-[ferredoxin] + S-adenosyl-L-homocysteine. In terms of biological role, specifically methylates position 2 of adenine 2503 in 23S rRNA and position 2 of adenine 37 in tRNAs. m2A2503 modification seems to play a crucial role in the proofreading step occurring at the peptidyl transferase center and thus would serve to optimize ribosomal fidelity. This Burkholderia cenocepacia (strain ATCC BAA-245 / DSM 16553 / LMG 16656 / NCTC 13227 / J2315 / CF5610) (Burkholderia cepacia (strain J2315)) protein is Dual-specificity RNA methyltransferase RlmN.